A 361-amino-acid polypeptide reads, in one-letter code: Phosphoserine aminotransferase (361 aa).

Arg43 contributes to the L-glutamate binding site. Pyridoxal 5'-phosphate contacts are provided by residues 77–78, Trp103, Thr153, Asp173, and Gln196; that span reads AS. Lys197 is subject to N6-(pyridoxal phosphate)lysine. 238–239 contributes to the pyridoxal 5'-phosphate binding site; that stretch reads NT.

The protein belongs to the class-V pyridoxal-phosphate-dependent aminotransferase family. SerC subfamily. As to quaternary structure, homodimer. Pyridoxal 5'-phosphate is required as a cofactor.

The protein resides in the cytoplasm. The catalysed reaction is O-phospho-L-serine + 2-oxoglutarate = 3-phosphooxypyruvate + L-glutamate. The enzyme catalyses 4-(phosphooxy)-L-threonine + 2-oxoglutarate = (R)-3-hydroxy-2-oxo-4-phosphooxybutanoate + L-glutamate. It participates in amino-acid biosynthesis; L-serine biosynthesis; L-serine from 3-phospho-D-glycerate: step 2/3. Its pathway is cofactor biosynthesis; pyridoxine 5'-phosphate biosynthesis; pyridoxine 5'-phosphate from D-erythrose 4-phosphate: step 3/5. In terms of biological role, catalyzes the reversible conversion of 3-phosphohydroxypyruvate to phosphoserine and of 3-hydroxy-2-oxo-4-phosphonooxybutanoate to phosphohydroxythreonine. The chain is Phosphoserine aminotransferase from Ectopseudomonas mendocina (strain ymp) (Pseudomonas mendocina).